An 832-amino-acid polypeptide reads, in one-letter code: MMEEEELEFVEELEAVLQLTPEVQLAIEQVFPSQDPLDRADFNAVEYINTLFPTEQSLANIDEVVNKIRLKIRRLDDNIRTVVRGQTNVGQDGRQALEEAQKAIQQLFGKIKDIKDKAEKSEQMVKEITRDIKQLDHAKRHLTTSITTLNHLHMLAGGVDSLEAMTRRRQYGEVANLLQGVMNVLEHFHKYMGIPQIRQLSERVKAAQTELGQQILADFEEAFPSQGTKRPGGPSNVLRDACLVANILDPRIKQEIIKKFIKQHLSEYLVLFQENQDVAWLDKIDRRYAWIKRQLVDYEEKYGRMFPREWCMAERIAVEFCHVTRTELAKIMRTRAKEIEVKLLLFAIQRTTNFEGFLAKRFSGCTLTDGTLKKLESPPPSTNPFLEDEPTPEMEELATEKGDLDQPKKPKAPDNPFHGIVSKCFEPHLYVYIESQDKNLGELIDRFVADFKAQGPPKPNTDEGGAVLPSCADLFVYYKKCMVQCSQLSTGEPMIALTTIFQKYLREYAWKILSGNLPKTTTSSGGLTISSLLKEKEGSEVAKFTLEELCLICSILSTAEYCLATTQQLEEKLKEKVDVSLIERINLTGEMDTFSTVISSSIQLLVQDLDAACDPALTAMSKMQWQNVEHVGDQSPYVTSVILHIKQNVPIIRDNLASTRKYFTQFCIKFANSFIPKFITHLFKCKPISMVGAEQLLLDTHSLKMVLLDLPSIGSQVVRKAPASYTKIVVKGMTRAEMILKVVMAPHEPLVVFVDNYIKLLTDCNTETFQKILDMKGLKRSEQSSMLELLRQRLPAPPSGAESSGSLSLMAPTPEQESSRIRKLEKLIKKRL.

Positions 97 to 138 (LEEAQKAIQQLFGKIKDIKDKAEKSEQMVKEITRDIKQLDHA) form a coiled coil. N6-acetyllysine is present on residues K110 and K360. A disordered region spans residues 373–412 (KKLESPPPSTNPFLEDEPTPEMEELATEKGDLDQPKKPKA). Position 377 is a phosphoserine (S377). Over residues 386–397 (LEDEPTPEMEEL) the composition is skewed to acidic residues. Phosphothreonine is present on T391. Positions 398-412 (ATEKGDLDQPKKPKA) are enriched in basic and acidic residues. S580 bears the Phosphoserine mark. Residues 794-822 (LPAPPSGAESSGSLSLMAPTPEQESSRIR) form a disordered region. The span at 799 to 809 (SGAESSGSLSL) shows a compositional bias: low complexity.

This sequence belongs to the VPS53 family. In terms of assembly, component of the Golgi-associated retrograde protein (GARP) complex, also called VFT (VPS fifty-three) complex, composed of VPS51, VPS52, VPS53 and VPS54. Component of the endosome-associated retrograde protein (EARP) complex, composed of VPS51, VPS52, VPS53 and VPS50/Syndetin. EIPR1 interacts with both EARP and GARP complexes and mediates the recruitment of the GARP complex to the trans-Golgi network. Interacts with VPS50 in an EIPR1-independent manner.

It is found in the golgi apparatus. Its subcellular location is the trans-Golgi network membrane. The protein resides in the endosome membrane. The protein localises to the recycling endosome. Its function is as follows. Acts as a component of the GARP complex that is involved in retrograde transport from early and late endosomes to the trans-Golgi network (TGN). The GARP complex is required for the maintenance of the cycling of mannose 6-phosphate receptors between the TGN and endosomes, this cycling is necessary for proper lysosomal sorting of acid hydrolases such as CTSD. Acts as a component of the EARP complex that is involved in endocytic recycling. The EARP complex associates with Rab4-positive endosomes and promotes recycling of internalized transferrin receptor (TFRC) to the plasma membrane. The protein is Vacuolar protein sorting-associated protein 53 homolog (VPS53) of Pongo abelii (Sumatran orangutan).